The sequence spans 1723 residues: Lys-gingipain HG66 (1723 aa).

The N-terminal stretch at 1-24 (MRKLLLLIAASLLGVGLYAQNAKI) is a signal peptide. Residues 25-228 (KLDAPTTRTT…ETAYKQLFNR (204 aa)) constitute a propeptide that is removed on maturation. Ca(2+)-binding residues include Asp-313, Asp-337, Asp-339, Phe-341, and Glu-343. His-444 functions as the Proton donor in the catalytic mechanism. Cys-477 functions as the Nucleophile in the catalytic mechanism. Ca(2+) contacts are provided by Phe-482 and Glu-491. A disordered region spans residues 965–985 (DAPNGTPNPNPNPNPGTTTLS). Ca(2+)-binding residues include Ser-987, Glu-989, Asp-1000, Asp-1002, Asp-1004, His-1006, Ser-1021, Gly-1023, Asn-1042, Asp-1145, and Glu-1146.

The protein belongs to the peptidase C25 family. Proteolytically cleaved into a catalytic subunit and three adhesins. Arg-gingipain is involved in this post-translational processing.

Its subcellular location is the secreted. It carries out the reaction Endopeptidase with strict specificity for lysyl bonds.. In terms of biological role, cysteine proteinase with a strong preference for substrates with Lys in the P1 position. Hydrolyzes bovine hemoglobin, bovine serum albumin, casein, human placental type I collagen and human IgA and IgG. Disrupts the functions of polymorphonuclear leukocytes. May act as a virulence factor in the development of peridontal disease. Involved in the coaggregation of P.gingivalis with other oral bacteria. In Porphyromonas gingivalis (Bacteroides gingivalis), this protein is Lys-gingipain HG66.